A 310-amino-acid chain; its full sequence is Porphobilinogen deaminase (310 aa).

At C242 the chain carries S-(dipyrrolylmethanemethyl)cysteine.

Belongs to the HMBS family. Monomer. Dipyrromethane serves as cofactor.

It carries out the reaction 4 porphobilinogen + H2O = hydroxymethylbilane + 4 NH4(+). The protein operates within porphyrin-containing compound metabolism; protoporphyrin-IX biosynthesis; coproporphyrinogen-III from 5-aminolevulinate: step 2/4. Tetrapolymerization of the monopyrrole PBG into the hydroxymethylbilane pre-uroporphyrinogen in several discrete steps. The protein is Porphobilinogen deaminase of Shewanella baltica (strain OS155 / ATCC BAA-1091).